The sequence spans 351 residues: uncharacterized protein (351 aa).

The Mn(2+) site is built by aspartate 215, aspartate 226, histidine 290, glutamate 319, and glutamate 333.

This sequence belongs to the peptidase M24B family. Requires Mn(2+) as cofactor.

This is an uncharacterized protein from Staphylococcus aureus (strain MRSA252).